A 113-amino-acid polypeptide reads, in one-letter code: Large ribosomal subunit protein uL22 (113 aa).

The protein belongs to the universal ribosomal protein uL22 family. In terms of assembly, part of the 50S ribosomal subunit.

In terms of biological role, this protein binds specifically to 23S rRNA; its binding is stimulated by other ribosomal proteins, e.g. L4, L17, and L20. It is important during the early stages of 50S assembly. It makes multiple contacts with different domains of the 23S rRNA in the assembled 50S subunit and ribosome. Functionally, the globular domain of the protein is located near the polypeptide exit tunnel on the outside of the subunit, while an extended beta-hairpin is found that lines the wall of the exit tunnel in the center of the 70S ribosome. This chain is Large ribosomal subunit protein uL22, found in Natranaerobius thermophilus (strain ATCC BAA-1301 / DSM 18059 / JW/NM-WN-LF).